The primary structure comprises 373 residues: GTPase Obg (373 aa).

The region spanning 1–159 is the Obg domain; sequence MKFIDEARIE…RMVRLELKVL (159 aa). The interval 128-147 is disordered; sequence LHFKSSTNRAPRQKTDGKPG. Residues 160-334 enclose the OBG-type G domain; it reads ADVGLLGMPN…LCYAVFDHIS (175 aa). GTP is bound by residues 166-173, 191-195, 213-216, 284-287, and 315-317; these read GMPNAGKS, FTTLA, DIPG, NKLD, and SAL. Residues Ser173 and Thr193 each contribute to the Mg(2+) site. A disordered region spans residues 354 to 373; it reads FREKPQAPAAADDAGTDPQV. A compositionally biased stretch (low complexity) spans 359–373; it reads QAPAAADDAGTDPQV.

Belongs to the TRAFAC class OBG-HflX-like GTPase superfamily. OBG GTPase family. In terms of assembly, monomer. Mg(2+) serves as cofactor.

The protein localises to the cytoplasm. In terms of biological role, an essential GTPase which binds GTP, GDP and possibly (p)ppGpp with moderate affinity, with high nucleotide exchange rates and a fairly low GTP hydrolysis rate. Plays a role in control of the cell cycle, stress response, ribosome biogenesis and in those bacteria that undergo differentiation, in morphogenesis control. In Paraburkholderia phytofirmans (strain DSM 17436 / LMG 22146 / PsJN) (Burkholderia phytofirmans), this protein is GTPase Obg.